A 197-amino-acid chain; its full sequence is Protein RmlC homolog (197 aa).

The Proton acceptor role is filled by histidine 76. The Proton donor role is filled by tyrosine 140.

Its function is as follows. Could catalyze a 3,5-epimerization. The protein is Protein RmlC homolog (rfbC) of Streptococcus pyogenes serotype M6 (strain ATCC BAA-946 / MGAS10394).